A 207-amino-acid polypeptide reads, in one-letter code: Large ribosomal subunit protein uL4 (207 aa).

The interval 49 to 78 is disordered; the sequence is HAVKNRSAVSGGGRKPWRQKGTGRARQGSI.

This sequence belongs to the universal ribosomal protein uL4 family. As to quaternary structure, part of the 50S ribosomal subunit.

One of the primary rRNA binding proteins, this protein initially binds near the 5'-end of the 23S rRNA. It is important during the early stages of 50S assembly. It makes multiple contacts with different domains of the 23S rRNA in the assembled 50S subunit and ribosome. Its function is as follows. Forms part of the polypeptide exit tunnel. The protein is Large ribosomal subunit protein uL4 of Streptococcus pneumoniae serotype 19F (strain G54).